A 987-amino-acid polypeptide reads, in one-letter code: MELFSRNVAAFWIILLEFLLGSVAEEEVLMNTKTETSDLKWTTHSRSKPEWEEVSGLDEENNSVRTYQICQADGSSSHWLRSKLIERRGASQVYVELFFTMVECSSRNTHHRSCKETFNLYYYQSDTDDATATHPAWMENPYTKVDTVAADFLLRKGGEKKVNVKTLRLGPLSKRGFYLAFQAQGACMALLSVRVFFKKCPALTRSLSVFPETVPRSLVQEAVGQCVANAAQPGPSPRPPKMFCGEDGQWVDQPTTTCTCLPGFEASHGELECRACPVGLFKMGSGTGPCSVCPENSQTGETGSAACVCRSGFYRALSDSADTPCTRPPSSPRSPVPQVNDTSLTLEWSEPLDSGGRSDLSYSVECRMCSTPGSPCTLCSDGVNYRPSQTGIQGRRVSIWGLRPHTTYSFTVMALNGVSAQSQQGPAGETINITTSPNVPVLVSGLRKSTATESSLTLYWNTPTQSHYRILQYQIRYCEKERGSEENSCHYMESNNNEVVLSDLRRATQYEVQVRARTFAGYGSFGKAILFRTLPDEDDSSSPLLVTGILIAMGMLLLIIVIGAAIYCIRKQNNYKDPELSDKNGQYLMGQGVKVYIDPFTYEDPNEAVREFAKEIDVSCVKIEEVIGAGEFGEVCRGRLRIPGKKENYVAIKTLKGGYTDKQRRDFLAEASIMGQFQHPNIIHLEGIITASCPVMILTEFMENGALDSFLRLNDGQFTPIQLVGMLRGIASGMKYLSEMSYVHRDLAARNILVNSNLVCKVSDFGLSRFLQENSSDPTYTSSLGGKIPIRWTAPEAIAFRKFTCASDVWSYGIVMWEVMSFGERPYWDMSNQDVINAIEQDYRLPPPPDCPTYLHQLMLDCWQKERTARPRFANIVSALDKLIRNPASLKITAQEGAGPSHPLLDQRSPLTPSSCGTVGDWLRAIKMERYEETFLQAGYTSMQLVTHINTEDLLRLGITLAGHQKKILSSIEALGIQNKAPGNVLY.

A signal peptide spans 1–24 (MELFSRNVAAFWIILLEFLLGSVA). At 25–548 (EEEVLMNTKT…DSSSPLLVTG (524 aa)) the chain is on the extracellular side. In terms of domain architecture, Eph LBD spans 26–205 (EEVLMNTKTE…FFKKCPALTR (180 aa)). 2 disulfide bridges follow: Cys70–Cys187 and Cys104–Cys114. The disordered stretch occupies residues 319–340 (DSADTPCTRPPSSPRSPVPQVN). Residues 326–335 (TRPPSSPRSP) are compositionally biased toward pro residues. 2 Fibronectin type-III domains span residues 328-438 (PPSS…TSPN) and 442-536 (LVSG…TLPD). Residues 549–569 (ILIAMGMLLLIIVIGAAIYCI) form a helical membrane-spanning segment. Residues 570-987 (RKQNNYKDPE…QNKAPGNVLY (418 aa)) lie on the Cytoplasmic side of the membrane. A Protein kinase domain is found at 621 to 884 (VKIEEVIGAG…NIVSALDKLI (264 aa)). Residues 627-635 (IGAGEFGEV) and Lys653 each bind ATP. Asp746 (proton acceptor) is an active-site residue. The region spanning 914-978 (SSCGTVGDWL…LSSIEALGIQ (65 aa)) is the SAM domain.

The protein belongs to the protein kinase superfamily. Tyr protein kinase family. Ephrin receptor subfamily.

Its subcellular location is the cell membrane. It carries out the reaction L-tyrosyl-[protein] + ATP = O-phospho-L-tyrosyl-[protein] + ADP + H(+). Receptor tyrosine kinase which binds promiscuously transmembrane ephrin-B family ligands residing on adjacent cells, leading to contact-dependent bidirectional signaling into neighboring cells. The signaling pathway downstream of the receptor is referred to as forward signaling while the signaling pathway downstream of the ephrin ligand is referred to as reverse signaling. Together with its cognate ligand/functional ligand EFNB2 is involved in the regulation of cell adhesion and cell migration, and plays a central role in heart morphogenesis, angiogenesis and blood vessel remodeling and permeability. EPHB4-mediated forward signaling controls cellular repulsion and segregation from EFNB2-expressing cells. Involved in somitogenesis. In Danio rerio (Zebrafish), this protein is Ephrin type-B receptor 4a.